We begin with the raw amino-acid sequence, 315 residues long: MPITVKDELPAIARLRQENVFVMPQTRAKTQEIRPMRLAILNLMPNKVETEVQFIRLLANSPLQVNVELLRLDTHRSSSNSEQHLDTFYRYFSEVKNNNYDALIVTGAPLAHLEYQDVAYWDEFTAILDWAEQHVTSTLFSCWAAHAALYHHYKIKRDLKTDKLCGVFTHQCYFEHGALTRGFDDTFLVPHSRYGHVDVNKINACNELVVLAGSEKVGAYLVKNKSGSQVFITGHPEYDADSLKAEYQRDCEKSDNAPKPENYFPDDDATKQPSKTWQSHAFLLFSNWLNYYVYQTTPYDINLVSQDVRTNNYAE.

C142 acts as the Acyl-thioester intermediate in catalysis. The substrate site is built by K163 and S192. Catalysis depends on H235, which acts as the Proton acceptor. E237 is an active-site residue. R249 is a substrate binding site. Over residues 249–258 the composition is skewed to basic and acidic residues; that stretch reads RDCEKSDNAP. Positions 249-271 are disordered; the sequence is RDCEKSDNAPKPENYFPDDDATK.

It belongs to the MetA family.

The protein resides in the cytoplasm. The catalysed reaction is L-homoserine + succinyl-CoA = O-succinyl-L-homoserine + CoA. The protein operates within amino-acid biosynthesis; L-methionine biosynthesis via de novo pathway; O-succinyl-L-homoserine from L-homoserine: step 1/1. Functionally, transfers a succinyl group from succinyl-CoA to L-homoserine, forming succinyl-L-homoserine. In Pseudoalteromonas translucida (strain TAC 125), this protein is Homoserine O-succinyltransferase.